We begin with the raw amino-acid sequence, 208 residues long: Mediator of RNA polymerase II transcription subunit 18 (208 aa).

Belongs to the Mediator complex subunit 18 family. As to quaternary structure, component of the Mediator complex.

The protein resides in the nucleus. In terms of biological role, component of the Mediator complex, a coactivator involved in the regulated transcription of nearly all RNA polymerase II-dependent genes. Mediator functions as a bridge to convey information from gene-specific regulatory proteins to the basal RNA polymerase II transcription machinery. Mediator is recruited to promoters by direct interactions with regulatory proteins and serves as a scaffold for the assembly of a functional preinitiation complex with RNA polymerase II and the general transcription factors. This chain is Mediator of RNA polymerase II transcription subunit 18 (med18), found in Xenopus tropicalis (Western clawed frog).